The primary structure comprises 253 residues: Small ribosomal subunit protein uS3 (253 aa).

The KH type-2 domain maps to 21-92 (LNEFLTRELA…SVELYAEKVA (72 aa)). Positions 211–253 (VEPKDEILPTTPISEQKGGKPDPQVPQQPPQQPPAMPPPVPTA) are disordered. Over residues 233 to 253 (PQVPQQPPQQPPAMPPPVPTA) the composition is skewed to pro residues.

Belongs to the universal ribosomal protein uS3 family.

The protein localises to the cytoplasm. Its subcellular location is the nucleus. The protein resides in the nucleolus. It localises to the mitochondrion inner membrane. It is found in the cytoskeleton. The protein localises to the spindle. It carries out the reaction 2'-deoxyribonucleotide-(2'-deoxyribose 5'-phosphate)-2'-deoxyribonucleotide-DNA = a 3'-end 2'-deoxyribonucleotide-(2,3-dehydro-2,3-deoxyribose 5'-phosphate)-DNA + a 5'-end 5'-phospho-2'-deoxyribonucleoside-DNA + H(+). Functionally, component of the small ribosomal subunit. The ribosome is a large ribonucleoprotein complex responsible for the synthesis of proteins in the cell. Has endonuclease activity and plays a role in repair of damaged DNA. Also involved in other processes including regulation of transcription, translation of its cognate mRNA, spindle formation and chromosome movement during mitosis, and apoptosis. The polypeptide is Small ribosomal subunit protein uS3 (RPS3) (Ambystoma mexicanum (Axolotl)).